Here is a 309-residue protein sequence, read N- to C-terminus: Tumor necrosis factor ligand superfamily member 9 (309 aa).

Basic and acidic residues predominate over residues 1 to 16 (MDQHTLDVEDTADARH). The interval 1–20 (MDQHTLDVEDTADARHPAGT) is disordered. Topologically, residues 1 to 82 (MDQHTLDVED…ALNFCSRHPK (82 aa)) are cytoplasmic. Residues 83–103 (LYGLVALVLLLLIAACVPIFT) traverse the membrane as a helical; Signal-anchor for type II membrane protein segment. At 104-309 (RTEPRPALTI…FLVKPDNPWE (206 aa)) the chain is on the extracellular side. N-linked (GlcNAc...) asparagine glycans are attached at residues Asn-139, Asn-161, and Asn-293. The THD domain maps to 147–302 (VFAKLLAKNQ…NTTSFGLFLV (156 aa)).

The protein belongs to the tumor necrosis factor family. In terms of assembly, homotrimer.

Its subcellular location is the membrane. In terms of biological role, cytokine that binds to TNFRSF9. Induces the proliferation of activated peripheral blood T-cells. May have a role in activation-induced cell death (AICD). May play a role in cognate interactions between T-cells and B-cells/macrophages. In Mus musculus (Mouse), this protein is Tumor necrosis factor ligand superfamily member 9 (Tnfsf9).